Reading from the N-terminus, the 239-residue chain is Small ribosomal subunit protein uS3 (239 aa).

The 69-residue stretch at 39 to 107 folds into the KH type-2 domain; that stretch reads VREFLRKKLA…ATSINIEEIR (69 aa). Positions 215 to 239 are disordered; it reads TSNTNELSDEKRNRRKPRNANRRKE. Residues 227–239 show a composition bias toward basic residues; sequence NRRKPRNANRRKE.

It belongs to the universal ribosomal protein uS3 family. In terms of assembly, part of the 30S ribosomal subunit. Forms a tight complex with proteins S10 and S14.

In terms of biological role, binds the lower part of the 30S subunit head. Binds mRNA in the 70S ribosome, positioning it for translation. In Dichelobacter nodosus (strain VCS1703A), this protein is Small ribosomal subunit protein uS3.